Consider the following 1405-residue polypeptide: DNA-directed RNA polymerase subunit beta' (1405 aa).

Positions 70, 72, 85, and 88 each coordinate Zn(2+). Mg(2+) is bound by residues Asp-460, Asp-462, and Asp-464. Zn(2+) contacts are provided by Cys-814, Cys-888, Cys-895, and Cys-898.

Belongs to the RNA polymerase beta' chain family. In terms of assembly, the RNAP catalytic core consists of 2 alpha, 1 beta, 1 beta' and 1 omega subunit. When a sigma factor is associated with the core the holoenzyme is formed, which can initiate transcription. It depends on Mg(2+) as a cofactor. Zn(2+) is required as a cofactor.

The catalysed reaction is RNA(n) + a ribonucleoside 5'-triphosphate = RNA(n+1) + diphosphate. In terms of biological role, DNA-dependent RNA polymerase catalyzes the transcription of DNA into RNA using the four ribonucleoside triphosphates as substrates. The polypeptide is DNA-directed RNA polymerase subunit beta' (Shewanella putrefaciens (strain CN-32 / ATCC BAA-453)).